Here is a 512-residue protein sequence, read N- to C-terminus: GMP synthase [glutamine-hydrolyzing] (512 aa).

One can recognise a Glutamine amidotransferase type-1 domain in the interval 7 to 197 (TIIVLDFGSQ…VFGVCGCSEG (191 aa)). Cysteine 84 acts as the Nucleophile in catalysis. Active-site residues include histidine 171 and glutamate 173. In terms of domain architecture, GMPS ATP-PPase spans 198–387 (WNMENFIEVE…LGIPDEIVWR (190 aa)). ATP is bound at residue 225 to 231 (SGGVDSS).

Homodimer.

It carries out the reaction XMP + L-glutamine + ATP + H2O = GMP + L-glutamate + AMP + diphosphate + 2 H(+). Its pathway is purine metabolism; GMP biosynthesis; GMP from XMP (L-Gln route): step 1/1. In terms of biological role, catalyzes the synthesis of GMP from XMP. The polypeptide is GMP synthase [glutamine-hydrolyzing] (Bacillus cereus (strain B4264)).